Here is a 250-residue protein sequence, read N- to C-terminus: Proteasome subunit alpha type-7-A (250 aa).

Lys62 participates in a covalent cross-link: Glycyl lysine isopeptide (Lys-Gly) (interchain with G-Cter in ubiquitin).

It belongs to the peptidase T1A family. As to quaternary structure, component of the 20S core complex of the 26S proteasome. The 26S proteasome is composed of a core protease (CP), known as the 20S proteasome, capped at one or both ends by the 19S regulatory particle (RP/PA700). The 20S proteasome core is composed of 28 subunits that are arranged in four stacked rings, resulting in a barrel-shaped structure. The two end rings are each formed by seven alpha subunits, and the two central rings are each formed by seven beta subunits. The catalytic chamber with the active sites is on the inside of the barrel. Interacts with KIN10 and KIN11 SnRK subunits, and with the SKP1A/ASK1 subunit of the SCF E3 ubiquitin ligase complex. Expressed in roots, leaves and flowers.

It is found in the cytoplasm. Its subcellular location is the nucleus. Functionally, the proteasome is a multicatalytic proteinase complex which is characterized by its ability to cleave peptides with Arg, Phe, Tyr, Leu, and Glu adjacent to the leaving group at neutral or slightly basic pH. The proteasome has an ATP-dependent proteolytic activity. Mediates the association of the SCF(TIR1) E3 ubiquitin ligase complex with the proteasome. This chain is Proteasome subunit alpha type-7-A (PAD1), found in Arabidopsis thaliana (Mouse-ear cress).